Reading from the N-terminus, the 100-residue chain is Toxin ParE3 (100 aa).

The protein belongs to the RelE toxin family.

Toxic component of a type II toxin-antitoxin (TA) system. Its toxic effect is neutralized by coexpression with cognate antitoxin ParD3 but no other ParD or RelB antitoxin. The protein is Toxin ParE3 (parE3) of Caulobacter vibrioides (strain ATCC 19089 / CIP 103742 / CB 15) (Caulobacter crescentus).